The following is a 509-amino-acid chain: Zinc metalloproteinase aureolysin (509 aa).

The signal sequence occupies residues 1 to 27; that stretch reads MRKFSRYAFTSMATVTLLSSLTPAALA. Residues 28–208 constitute a propeptide that is removed on maturation; sequence SDTNHKPATS…VVEKTNLVKE (181 aa). Residue D348 coordinates Ca(2+). Residue H352 participates in Zn(2+) binding. E353 is a catalytic residue. H356 and E376 together coordinate Zn(2+). Ca(2+) contacts are provided by D387, E389, D390, L392, E395, Y398, T399, K402, and D405. H436 (proton donor) is an active-site residue.

Belongs to the peptidase M4 family. As to quaternary structure, monomer. The cofactor is Ca(2+). Requires Zn(2+) as cofactor.

The enzyme catalyses Cleavage of insulin B chain with specificity similar to that of thermolysin, preferring hydrophobic P1' residues. Activates the glutamyl endopeptidase (EC 3.4.21.19) of Staphylococcus aureus.. Plays an essential role in immune evasion by helping bacteria to resist complement-mediated killing by neutrophils. Inhibits the deposition of host C3b on bacterial surfaces and the release of the chemoattractant C5a by cleaving the central complement protein C3. The cleavage site renders the C3b molecule vulnerable to proteolytic degradation by host regulators. Cleaves and inactivates host SERPINA1, which is an endogenous protease inhibitor essential for controlling neutrophil serine protease elastase. Also plays an essential role in the cleavage and subsequent activation of the serine protease SspA (glutamyl endopeptidase) which is involved in colonization and infection of human tissues. This Staphylococcus aureus protein is Zinc metalloproteinase aureolysin.